The sequence spans 332 residues: Phosphate acyltransferase (332 aa).

This sequence belongs to the PlsX family. As to quaternary structure, homodimer. Probably interacts with PlsY.

It is found in the cytoplasm. It catalyses the reaction a fatty acyl-[ACP] + phosphate = an acyl phosphate + holo-[ACP]. It participates in lipid metabolism; phospholipid metabolism. Its function is as follows. Catalyzes the reversible formation of acyl-phosphate (acyl-PO(4)) from acyl-[acyl-carrier-protein] (acyl-ACP). This enzyme utilizes acyl-ACP as fatty acyl donor, but not acyl-CoA. The polypeptide is Phosphate acyltransferase (Clostridium novyi (strain NT)).